We begin with the raw amino-acid sequence, 431 residues long: Adenylosuccinate lyase (431 aa).

N(6)-(1,2-dicarboxyethyl)-AMP contacts are provided by residues 4-5, 67-69, and 93-94; these read RY, RHD, and TS. Catalysis depends on His141, which acts as the Proton donor/acceptor. A N(6)-(1,2-dicarboxyethyl)-AMP-binding site is contributed by Gln212. The active-site Proton donor/acceptor is the Ser262. N(6)-(1,2-dicarboxyethyl)-AMP-binding positions include Ser263, 268–270, Asn276, and 307–311; these read KRN and SAERI.

It belongs to the lyase 1 family. Adenylosuccinate lyase subfamily. In terms of assembly, homodimer and homotetramer. Residues from neighboring subunits contribute catalytic and substrate-binding residues to each active site.

The catalysed reaction is N(6)-(1,2-dicarboxyethyl)-AMP = fumarate + AMP. The enzyme catalyses (2S)-2-[5-amino-1-(5-phospho-beta-D-ribosyl)imidazole-4-carboxamido]succinate = 5-amino-1-(5-phospho-beta-D-ribosyl)imidazole-4-carboxamide + fumarate. The protein operates within purine metabolism; AMP biosynthesis via de novo pathway; AMP from IMP: step 2/2. It functions in the pathway purine metabolism; IMP biosynthesis via de novo pathway; 5-amino-1-(5-phospho-D-ribosyl)imidazole-4-carboxamide from 5-amino-1-(5-phospho-D-ribosyl)imidazole-4-carboxylate: step 2/2. Catalyzes two reactions in de novo purine nucleotide biosynthesis. Catalyzes the breakdown of 5-aminoimidazole- (N-succinylocarboxamide) ribotide (SAICAR or 2-[5-amino-1-(5-phospho-beta-D-ribosyl)imidazole-4-carboxamido]succinate) to 5-aminoimidazole-4-carboxamide ribotide (AICAR or 5-amino-1-(5-phospho-beta-D-ribosyl)imidazole-4-carboxamide) and fumarate, and of adenylosuccinate (ADS or N(6)-(1,2-dicarboxyethyl)-AMP) to adenosine monophosphate (AMP) and fumarate. The sequence is that of Adenylosuccinate lyase (purB) from Staphylococcus aureus (strain USA300).